The chain runs to 244 residues: Ras-related protein Rab-12 (244 aa).

M1 bears the N-acetylmethionine mark. Residues 1 to 10 (MDPGAALQRR) are compositionally biased toward low complexity. The disordered stretch occupies residues 1–37 (MDPGAALQRRAGGGGGLGAGSPALSGGQGRRRKQPPR). S21 and S25 each carry phosphoserine. G52 contacts GDP. Residues G52, V53, G54, K55, and T56 each contribute to the GTP site. G54, K55, T56, and S57 together coordinate GDP. T56 serves as a coordination point for Mg(2+). 2 consecutive short sequence motifs (switch) follow at residues 65–79 (DTFCEACKSTVGVDF) and 97–114 (DTAGQERFNSITSAYYRS). Residues S73 and T74 each contribute to the GTP site. The Mg(2+) site is built by T74 and D97. G100 lines the GTP pocket. Residue S106 is modified to Phosphoserine; by LRRK2. Residues N155, K156, D158, and C159 each contribute to the GDP site. Positions 155, 156, and 158 each coordinate GTP. The GTP site is built by S186, A187, and K188. GDP-binding residues include A187 and K188. The interval 225–244 (QPEPEIPPELPPPRPHVRCC) is disordered. Over residues 228 to 238 (PEIPPELPPPR) the composition is skewed to pro residues. 2 S-geranylgeranyl cysteine lipidation sites follow: C243 and C244.

Belongs to the small GTPase superfamily. Rab family. As to quaternary structure, interacts with RABIF. Interacts with OPTN. Interacts with LRRK2; interaction facilitates phosphorylation of Ser-106. Interacts with GDI1, GDI2, CHM and CHML; these interactions are disrupted by phosphorylation on Ser-106. Interacts with RILPL1 and RILPL2; these interactions are dependent on phosphorylation of Ser-106. The cofactor is Mg(2+). Post-translationally, phosphorylation of Ser-106 in the switch II region by LRRK2 prevents the association of RAB regulatory proteins, including CHM, CHML and RAB GDP dissociation inhibitors GDI1 and GDI2.

The protein localises to the recycling endosome membrane. It localises to the lysosome membrane. It is found in the golgi apparatus membrane. Its subcellular location is the cytoplasmic vesicle. The protein resides in the autophagosome. The catalysed reaction is GTP + H2O = GDP + phosphate + H(+). With respect to regulation, regulated by guanine nucleotide exchange factors (GEFs) including DENND3 which promote the exchange of bound GDP for free GTP. Regulated by GTPase activating proteins (GAPs) which increase the GTP hydrolysis activity. Inhibited by GDP dissociation inhibitors (GDIs). In terms of biological role, the small GTPases Rab are key regulators of intracellular membrane trafficking, from the formation of transport vesicles to their fusion with membranes. Rabs cycle between an inactive GDP-bound form and an active GTP-bound form that is able to recruit to membranes different sets of downstream effectors directly responsible for vesicle formation, movement, tethering and fusion. RAB12 may play a role in protein transport from recycling endosomes to lysosomes regulating, for instance, the degradation of the transferrin receptor. Involved in autophagy. This Homo sapiens (Human) protein is Ras-related protein Rab-12.